A 406-amino-acid polypeptide reads, in one-letter code: Propionate kinase (406 aa).

Positions 11 and 18 each coordinate ATP. Asparagine 11 is a Mg(2+) binding site. Arginine 86 contributes to the substrate binding site. The active-site Proton donor/acceptor is the aspartate 143. Residues histidine 175, 203–207 (HLGNG), 278–280 (DMR), and 326–330 (GIGEN) contribute to the ATP site.

It belongs to the acetokinase family. TdcD subfamily. In terms of assembly, homodimer. It depends on Mg(2+) as a cofactor.

The catalysed reaction is propanoate + ATP = propanoyl phosphate + ADP. It functions in the pathway amino-acid degradation; L-threonine degradation via propanoate pathway; propanoate from L-threonine: step 4/4. In terms of biological role, catalyzes the conversion of propionyl phosphate and ADP to propionate and ATP. The sequence is that of Propionate kinase from Yersinia enterocolitica serotype O:8 / biotype 1B (strain NCTC 13174 / 8081).